We begin with the raw amino-acid sequence, 257 residues long: Deoxyribose-phosphate aldolase (257 aa).

Aspartate 102 functions as the Proton donor/acceptor in the catalytic mechanism. The active-site Schiff-base intermediate with acetaldehyde is the lysine 166. Catalysis depends on lysine 198, which acts as the Proton donor/acceptor.

It belongs to the DeoC/FbaB aldolase family. DeoC type 2 subfamily.

The protein resides in the cytoplasm. The enzyme catalyses 2-deoxy-D-ribose 5-phosphate = D-glyceraldehyde 3-phosphate + acetaldehyde. It functions in the pathway carbohydrate degradation; 2-deoxy-D-ribose 1-phosphate degradation; D-glyceraldehyde 3-phosphate and acetaldehyde from 2-deoxy-alpha-D-ribose 1-phosphate: step 2/2. Catalyzes a reversible aldol reaction between acetaldehyde and D-glyceraldehyde 3-phosphate to generate 2-deoxy-D-ribose 5-phosphate. The protein is Deoxyribose-phosphate aldolase of Shewanella woodyi (strain ATCC 51908 / MS32).